The following is a 295-amino-acid chain: Acetylglutamate kinase (295 aa).

Substrate-binding positions include 66 to 67, Arg88, and Asn193; that span reads GG.

This sequence belongs to the acetylglutamate kinase family. ArgB subfamily.

Its subcellular location is the cytoplasm. It carries out the reaction N-acetyl-L-glutamate + ATP = N-acetyl-L-glutamyl 5-phosphate + ADP. The protein operates within amino-acid biosynthesis; L-arginine biosynthesis; N(2)-acetyl-L-ornithine from L-glutamate: step 2/4. Its function is as follows. Catalyzes the ATP-dependent phosphorylation of N-acetyl-L-glutamate. This chain is Acetylglutamate kinase, found in Gluconobacter oxydans (strain 621H) (Gluconobacter suboxydans).